The sequence spans 314 residues: tRNA pseudouridine synthase B (314 aa).

Asp54 (nucleophile) is an active-site residue.

This sequence belongs to the pseudouridine synthase TruB family. Type 1 subfamily.

It catalyses the reaction uridine(55) in tRNA = pseudouridine(55) in tRNA. Its function is as follows. Responsible for synthesis of pseudouridine from uracil-55 in the psi GC loop of transfer RNAs. The polypeptide is tRNA pseudouridine synthase B (Ralstonia nicotianae (strain ATCC BAA-1114 / GMI1000) (Ralstonia solanacearum)).